A 180-amino-acid chain; its full sequence is Guanosine-3',5'-bis(diphosphate) 3'-pyrophosphohydrolase MESH1 (180 aa).

Positions 33–128 (YINHPIGVAR…VKLADKLYNL (96 aa)) constitute an HD domain. Positions 36, 62, and 63 each coordinate Mn(2+). Residues Glu-66 and Asp-67 each act as nucleophile in the active site. Asp-123 contacts Mn(2+).

This sequence belongs to the MESH1 family. It depends on Mn(2+) as a cofactor.

The catalysed reaction is guanosine 3',5'-bis(diphosphate) + H2O = GDP + diphosphate + H(+). PpGpp hydrolyzing enzyme involved in starvation response. The chain is Guanosine-3',5'-bis(diphosphate) 3'-pyrophosphohydrolase MESH1 (hddc3) from Danio rerio (Zebrafish).